The chain runs to 341 residues: MKDNYILAFETSCDETSVAILKNGSELLCNIIASQINSHKRFGGVVPEIASRHHVEQITVCIEAALEEAEISADQLTAVAVTEGPGLNGALLVGIMAAKTFAWANHLPLIPVNHMAGHLMAASLVDTIEYPAMALLVSGGHSELVYVEKEGSYKKVGETRDDAAGEAYDKVGRVMGLTYPSGKVIDELAHKGQDTYNFPRAMMNTHEVEFSFSGLKSAFINLVHNENQKGNDVIANDLENLAASFQAAVVDVLMAKTKLAMEKYPVKTLIIGGGVSANQGLRERLSAEITDEKLIIPPLRLCGDNAGMIAAAAYIEWKKGLENVQAGLDLNAKPSLVFEDM.

Residues H114 and H118 each contribute to the Fe cation site. Substrate-binding positions include 136-140 (LVSGG), D169, G182, D186, and N278. D304 lines the Fe cation pocket.

Belongs to the KAE1 / TsaD family. Fe(2+) serves as cofactor.

It is found in the cytoplasm. It catalyses the reaction L-threonylcarbamoyladenylate + adenosine(37) in tRNA = N(6)-L-threonylcarbamoyladenosine(37) in tRNA + AMP + H(+). Required for the formation of a threonylcarbamoyl group on adenosine at position 37 (t(6)A37) in tRNAs that read codons beginning with adenine. Is involved in the transfer of the threonylcarbamoyl moiety of threonylcarbamoyl-AMP (TC-AMP) to the N6 group of A37, together with TsaE and TsaB. TsaD likely plays a direct catalytic role in this reaction. The protein is tRNA N6-adenosine threonylcarbamoyltransferase of Lactococcus lactis subsp. cremoris (strain SK11).